Here is a 479-residue protein sequence, read N- to C-terminus: Cyclin-dependent kinase F-1 (479 aa).

Positions Tyr24–Phe419 constitute a Protein kinase domain. Residues Ala30 to Val38 and Lys53 contribute to the ATP site. Asp146 acts as the Proton acceptor in catalysis. Thr291 is subject to Phosphothreonine. Positions Glu429–Ser479 are disordered. Residues Thr468–Ser479 show a composition bias toward basic and acidic residues.

It belongs to the protein kinase superfamily. CMGC Ser/Thr protein kinase family. CDC2/CDKX subfamily.

The enzyme catalyses L-seryl-[protein] + ATP = O-phospho-L-seryl-[protein] + ADP + H(+). The catalysed reaction is L-threonyl-[protein] + ATP = O-phospho-L-threonyl-[protein] + ADP + H(+). It catalyses the reaction [DNA-directed RNA polymerase] + ATP = phospho-[DNA-directed RNA polymerase] + ADP + H(+). The sequence is that of Cyclin-dependent kinase F-1 (CDKF-1) from Oryza sativa subsp. japonica (Rice).